Consider the following 880-residue polypeptide: Valine--tRNA ligase (880 aa).

The 'HIGH' region motif lies at 49–59; the sequence is PNVTGKLHLGH. The 'KMSKS' region motif lies at 525-529; that stretch reads KMSKS. K528 contacts ATP. Positions 809 to 880 form a coiled coil; sequence LEGLINIDEE…VEKRIAELKN (72 aa).

This sequence belongs to the class-I aminoacyl-tRNA synthetase family. ValS type 1 subfamily. In terms of assembly, monomer.

It is found in the cytoplasm. The enzyme catalyses tRNA(Val) + L-valine + ATP = L-valyl-tRNA(Val) + AMP + diphosphate. Its function is as follows. Catalyzes the attachment of valine to tRNA(Val). As ValRS can inadvertently accommodate and process structurally similar amino acids such as threonine, to avoid such errors, it has a 'posttransfer' editing activity that hydrolyzes mischarged Thr-tRNA(Val) in a tRNA-dependent manner. The chain is Valine--tRNA ligase from Bacillus licheniformis (strain ATCC 14580 / DSM 13 / JCM 2505 / CCUG 7422 / NBRC 12200 / NCIMB 9375 / NCTC 10341 / NRRL NRS-1264 / Gibson 46).